The chain runs to 205 residues: uncharacterized protein (205 aa).

Residues 26–129 (DWHHVSRVAD…VQDADRLDAI (104 aa)) enclose the HD domain.

This is an uncharacterized protein from Bacillus subtilis (strain 168).